Here is a 115-residue protein sequence, read N- to C-terminus: NADH-ubiquinone oxidoreductase chain 3 (115 aa).

The next 3 helical transmembrane spans lie at 4 to 24 (LMAL…AFWL), 55 to 75 (FFLV…LLPL), and 84 to 104 (INIM…GLAY).

This sequence belongs to the complex I subunit 3 family. Core subunit of respiratory chain NADH dehydrogenase (Complex I) which is composed of 45 different subunits. Interacts with TMEM186. Interacts with TMEM242.

It is found in the mitochondrion inner membrane. The catalysed reaction is a ubiquinone + NADH + 5 H(+)(in) = a ubiquinol + NAD(+) + 4 H(+)(out). Core subunit of the mitochondrial membrane respiratory chain NADH dehydrogenase (Complex I) which catalyzes electron transfer from NADH through the respiratory chain, using ubiquinone as an electron acceptor. Essential for the catalytic activity of complex I. The polypeptide is NADH-ubiquinone oxidoreductase chain 3 (Peromyscus melanotis (Black-eared mouse)).